A 245-amino-acid chain; its full sequence is Orotidine 5'-phosphate decarboxylase (245 aa).

Residues Asp-22, Lys-44, 71–80 (DLKFHDIPNT), Thr-131, Arg-192, Gln-201, Gly-221, and Arg-222 contribute to the substrate site. Lys-73 acts as the Proton donor in catalysis.

Belongs to the OMP decarboxylase family. Type 1 subfamily. In terms of assembly, homodimer.

The enzyme catalyses orotidine 5'-phosphate + H(+) = UMP + CO2. Its pathway is pyrimidine metabolism; UMP biosynthesis via de novo pathway; UMP from orotate: step 2/2. Functionally, catalyzes the decarboxylation of orotidine 5'-monophosphate (OMP) to uridine 5'-monophosphate (UMP). The chain is Orotidine 5'-phosphate decarboxylase from Escherichia coli O6:K15:H31 (strain 536 / UPEC).